A 90-amino-acid polypeptide reads, in one-letter code: UPF0298 protein BLi01717/BL02989 (90 aa).

It belongs to the UPF0298 family.

It is found in the cytoplasm. This chain is UPF0298 protein BLi01717/BL02989, found in Bacillus licheniformis (strain ATCC 14580 / DSM 13 / JCM 2505 / CCUG 7422 / NBRC 12200 / NCIMB 9375 / NCTC 10341 / NRRL NRS-1264 / Gibson 46).